The sequence spans 742 residues: UPF0313 protein MA_4618 (742 aa).

Positions 1-125 (MGVRKQTMVK…SFSSSLPASK (125 aa)) are disordered. Residues 1-128 (MGVRKQTMVK…SSLPASKFLP (128 aa)) are unknown. Composition is skewed to basic and acidic residues over residues 17–40 (ENKK…ERAG) and 49–73 (KKVE…KAEG). Basic residues predominate over residues 106–115 (TGKKEKKQKK). The UPF0313 stretch occupies residues 129-742 (MSPEEVKARG…KCLIRRKEKQ (614 aa)). In terms of domain architecture, Radical SAM core spans 438-707 (ALEMVKFSLT…AMQRALMHYR (270 aa)). Positions 452, 456, and 459 each coordinate [4Fe-4S] cluster.

It in the C-terminal section; belongs to the UPF0313 family. [4Fe-4S] cluster is required as a cofactor.

The chain is UPF0313 protein MA_4618 from Methanosarcina acetivorans (strain ATCC 35395 / DSM 2834 / JCM 12185 / C2A).